The sequence spans 44 residues: Mu-conotoxin-like Cal 12.1.1e (44 aa).

4 disulfide bridges follow: Cys3–Cys16, Cys11–Cys28, Cys18–Cys33, and Cys27–Cys38. A 6'-bromotryptophan modification is found at Trp17. Pro23 bears the 4-hydroxyproline mark. 6'-bromotryptophan occurs at positions 36 and 37. A 4-hydroxyproline modification is found at Pro39. A 6'-bromotryptophan modification is found at Trp43.

In terms of tissue distribution, expressed by the venom duct.

Its subcellular location is the secreted. Functionally, mu-conotoxins block voltage-gated sodium channels. This toxin reversibly blocks voltage-gated sodium channel in cephalopods, with no alteration in the voltage dependence of sodium conductance or on the kinetics of inactivation. The polypeptide is Mu-conotoxin-like Cal 12.1.1e (Californiconus californicus (California cone)).